A 259-amino-acid polypeptide reads, in one-letter code: Eukaryotic translation initiation factor 3 subunit J (259 aa).

The span at 1–12 (MAAAAAAAAGDS) shows a compositional bias: low complexity. The interval 1 to 70 (MAAAAAAAAG…KEEAEVKPEV (70 aa)) is sufficient for interaction with EIF3B. The interval 1–111 (MAAAAAAAAG…EPEEPKVLTP (111 aa)) is disordered. A phosphoserine mark is found at S12, S14, and S21. Residues 41-60 (EGEDEDEDVKDNWDDDDDEK) show a composition bias toward acidic residues. Residues 61-107 (KEEAEVKPEVKISEKKKIAEKIKEKERQQKKRQEEIKKRLEEPEEPK) show a composition bias toward basic and acidic residues. Residues 71–136 (KISEKKKIAE…ESDLELAKET (66 aa)) adopt a coiled-coil conformation. K107 participates in a covalent cross-link: Glycyl lysine isopeptide (Lys-Gly) (interchain with G-Cter in SUMO2). T110 carries the post-translational modification Phosphothreonine. A Phosphoserine modification is found at S128. The segment at 218–247 (SKAKKKKKGVVPGGGLKATMKDDLADYGGY) is disordered. The interval 244–259 (YGGYDGGYVQDYEDFM) is promotes stable association with the 40S ribosome. The residue at position 255 (Y255) is a Phosphotyrosine.

The protein belongs to the eIF-3 subunit J family. In terms of assembly, component of the eukaryotic translation initiation factor 3 (eIF-3) complex, which is composed of 13 subunits: EIF3A, EIF3B, EIF3C, EIF3D, EIF3E, EIF3F, EIF3G, EIF3H, EIF3I, EIF3J, EIF3K, EIF3L and EIF3M. The eIF-3 complex appears to include 3 stable modules: module A is composed of EIF3A, EIF3B, EIF3G and EIF3I; module B is composed of EIF3F, EIF3H, and EIF3M; and module C is composed of EIF3C, EIF3D, EIF3E, EIF3K and EIF3L. EIF3C of module C binds EIF3B of module A and EIF3H of module B, thereby linking the three modules. EIF3J is a labile subunit that binds to the eIF-3 complex via EIF3B. The eIF-3 complex interacts with RPS6KB1 under conditions of nutrient depletion. Mitogenic stimulation leads to binding and activation of a complex composed of MTOR and RPTOR, leading to phosphorylation and release of RPS6KB1 and binding of EIF4B to eIF-3. Post-translationally, phosphorylated. Phosphorylation is enhanced upon serum stimulation.

Its subcellular location is the cytoplasm. In terms of biological role, component of the eukaryotic translation initiation factor 3 (eIF-3) complex, which is required for several steps in the initiation of protein synthesis. The eIF-3 complex associates with the 40S ribosome and facilitates the recruitment of eIF-1, eIF-1A, eIF-2:GTP:methionyl-tRNAi and eIF-5 to form the 43S pre-initiation complex (43S PIC). The eIF-3 complex stimulates mRNA recruitment to the 43S PIC and scanning of the mRNA for AUG recognition. The eIF-3 complex is also required for disassembly and recycling of post-termination ribosomal complexes and subsequently prevents premature joining of the 40S and 60S ribosomal subunits prior to initiation. The eIF-3 complex specifically targets and initiates translation of a subset of mRNAs involved in cell proliferation, including cell cycling, differentiation and apoptosis, and uses different modes of RNA stem-loop binding to exert either translational activation or repression. This subunit binds directly within the mRNA entry channel of the 40S ribosome to the aminoacyl (A) site. It may regulate the interaction between the 43S PIC and mRNA. In Pongo abelii (Sumatran orangutan), this protein is Eukaryotic translation initiation factor 3 subunit J.